Here is a 602-residue protein sequence, read N- to C-terminus: Rho family-interacting cell polarization regulator 2 (602 aa).

The segment at 46-73 is disordered; the sequence is KKPQAKVKKMHNLGHKNSTTPKEPQPKR. A compositionally biased stretch (basic residues) spans 48-59; that stretch reads PQAKVKKMHNLG. Residues 83-112 adopt a coiled-coil conformation; sequence NGLDEYLEVHQTELDKLTAQLKDMRRNSRL. A necessary for interaction with NCAM and myoblast protrusion formation region spans residues 173–421; the sequence is RESLTEINRS…TTAATQHRAL (249 aa). A disordered region spans residues 384–474; that stretch reads GDLPYEDRVP…RSEVCQKPSN (91 aa). Positions 403–416 are enriched in polar residues; sequence AHVSSSPDITTAAT. A compositionally biased stretch (low complexity) spans 423-437; sequence SSESSSPDCSSSDSC.

It belongs to the RIPOR family. In terms of assembly, homooligomer; homooligomerization is regulated by RHOC and leads to the formation of concatemers through the association of N- and C-termini. Interacts with NCAM.

The protein localises to the cytoplasm. It localises to the cytoskeleton. It is found in the cell projection. The protein resides in the filopodium. Its subcellular location is the apical cell membrane. The protein localises to the stereocilium. It localises to the stereocilium membrane. Acts as an inhibitor of the small GTPase RHOA and plays several roles in the regulation of myoblast and hair cell differentiation, lymphocyte T proliferation and neutrophil polarization. Plays a role in fetal mononuclear myoblast differentiation by promoting filopodia and myotube formation. Maintains naive T lymphocytes in a quiescent state and prevents chemokine-induced T lymphocyte responses, such as cell adhesion, polarization and migration. Involved also in the regulation of neutrophil polarization, chemotaxis and adhesion. Required for normal development of inner and outer hair cell stereocilia within the cochlea of the inner ear. Plays a role for maintaining the structural organization of the basal domain of stereocilia. Involved in mechanosensory hair cell function. Required for normal hearing. In Gallus gallus (Chicken), this protein is Rho family-interacting cell polarization regulator 2.